Here is a 948-residue protein sequence, read N- to C-terminus: Phosphatidylinositol-glycan-specific phospholipase D (948 aa).

A signal peptide spans 1–24 (MKNKIILLWLLLIVILCTISNVKG). N-linked (GlcNAc...) asparagine glycosylation is found at Asn39, Asn78, Asn148, Asn300, Asn433, Asn452, Asn506, and Asn535. 4 FG-GAP repeats span residues 451–512 (TNFT…SVTI), 526–588 (QVAT…NPAG), 596–656 (LPSI…RISG), and 663–724 (DADY…LNSF). N-linked (GlcNAc...) asparagine glycosylation is found at Asn749 and Asn788. FG-GAP repeat units follow at residues 799-861 (NLLL…LTND) and 895-948 (SSGG…NIFQ).

It belongs to the GPLD1 family. Ca(2+) is required as a cofactor.

Its subcellular location is the secreted. It catalyses the reaction a 6-(alpha-D-glucosaminyl)-1-(1,2-diacyl-sn-glycero-3-phospho)-1D-myo-inositol + H2O = 6-(alpha-D-glucosaminyl)-1D-myo-inositol + a 1,2-diacyl-sn-glycero-3-phosphate + H(+). Functionally, hydrolyzes the inositol phosphate linkage in proteins anchored by phosphatidylinositol glycans (GPI-anchor) thus releasing these proteins from the membrane. May also cleave GPI anchor intermediates intracellularly. This chain is Phosphatidylinositol-glycan-specific phospholipase D (pldG), found in Dictyostelium discoideum (Social amoeba).